A 454-amino-acid chain; its full sequence is tRNA modification GTPase MnmE (454 aa).

3 residues coordinate (6S)-5-formyl-5,6,7,8-tetrahydrofolate: R23, E80, and K120. Residues 216–377 (TIKIVIAGPP…LKNKILEITT (162 aa)) form the TrmE-type G domain. N226 contacts K(+). Residues 226 to 231 (NVGKSS), 245 to 251 (TNIPGTT), and 270 to 273 (DTAG) each bind GTP. Residue S230 participates in Mg(2+) binding. Residues T245, I247, and T250 each contribute to the K(+) site. T251 is a Mg(2+) binding site. A (6S)-5-formyl-5,6,7,8-tetrahydrofolate-binding site is contributed by K454.

This sequence belongs to the TRAFAC class TrmE-Era-EngA-EngB-Septin-like GTPase superfamily. TrmE GTPase family. In terms of assembly, homodimer. Heterotetramer of two MnmE and two MnmG subunits. The cofactor is K(+).

Its subcellular location is the cytoplasm. In terms of biological role, exhibits a very high intrinsic GTPase hydrolysis rate. Involved in the addition of a carboxymethylaminomethyl (cmnm) group at the wobble position (U34) of certain tRNAs, forming tRNA-cmnm(5)s(2)U34. The protein is tRNA modification GTPase MnmE of Buchnera aphidicola subsp. Cinara cedri (strain Cc).